The chain runs to 408 residues: Tyrosine--tRNA ligase (408 aa).

A 'HIGH' region motif is present at residues 46–55 (PTAPDLHVGH). A 'KMSKS' region motif is present at residues 230–234 (KMSKS). ATP is bound at residue K233. The region spanning 343-404 (VWICRLLTDA…GKRRFARIKF (62 aa)) is the S4 RNA-binding domain.

It belongs to the class-I aminoacyl-tRNA synthetase family. TyrS type 2 subfamily. Homodimer.

Its subcellular location is the cytoplasm. It carries out the reaction tRNA(Tyr) + L-tyrosine + ATP = L-tyrosyl-tRNA(Tyr) + AMP + diphosphate + H(+). Catalyzes the attachment of tyrosine to tRNA(Tyr) in a two-step reaction: tyrosine is first activated by ATP to form Tyr-AMP and then transferred to the acceptor end of tRNA(Tyr). The protein is Tyrosine--tRNA ligase of Syntrophotalea carbinolica (strain DSM 2380 / NBRC 103641 / GraBd1) (Pelobacter carbinolicus).